Here is an 83-residue protein sequence, read N- to C-terminus: Beta-defensin 19 (83 aa).

Positions 1–19 are cleaved as a signal peptide; that stretch reads MRLALLLLAILVATELVVS. Cystine bridges form between Cys-27–Cys-54, Cys-34–Cys-48, and Cys-38–Cys-55.

This sequence belongs to the beta-defensin family. Specifically expressed in male gonads (Sertoli cells).

It localises to the secreted. Has antibacterial activity. The protein is Beta-defensin 19 (Defb19) of Mus musculus (Mouse).